The primary structure comprises 427 residues: Synaptotagmin-A (427 aa).

Residues 1-57 lie on the Vesicular side of the membrane; that stretch reads MKLTEAYHDALAALPATPPLPTAVANATEAAAGSEEGKQDGFSKVKVKEKFMNELNK. N-linked (GlcNAc...) asparagine glycosylation is present at Asn-26. The helical transmembrane segment at 58 to 84 threads the bilayer; that stretch reads IPLPPWALVAIAIVAIILGLTCCFCIC. The Cytoplasmic segment spans residues 85–427; it reads KKCLLKKKNK…EVDATLGMKK (343 aa). Residues 96–145 are disordered; it reads KGKEKGGKNAMTMKDVKEMGKSGKEQALKDEDEDAETGLTTDGKEEEKED. A compositionally biased stretch (basic and acidic residues) spans 109–124; it reads KDVKEMGKSGKEQALK. Residues 141–387 are phospholipid binding; it reads EEKEDEKLGK…AIGKVFVGYN (247 aa). C2 domains follow at residues 147 to 266 and 278 to 411; these read KLGK…EEWR and KLGD…AQWH. Positions 177, 178, 184, 236, 237, 238, 241, 242, 244, 309, 315, 369, 371, and 377 each coordinate Ca(2+).

It belongs to the synaptotagmin family. As to quaternary structure, homodimer or homotrimer (possible). It depends on Ca(2+) as a cofactor. As to expression, forebrain, cerebellum and neuroendocrine cells.

The protein resides in the cytoplasmic vesicle. It is found in the secretory vesicle. Its subcellular location is the synaptic vesicle membrane. It localises to the synapse. Its function is as follows. May have a regulatory role in the membrane interactions during trafficking of synaptic vesicles at the active zone of the synapse. It binds acidic phospholipids with a specificity that requires the presence of both an acidic head group and a diacyl backbone. This Diplobatis ommata (Ocellated electric ray) protein is Synaptotagmin-A (P65-A).